A 243-amino-acid chain; its full sequence is tRNA pseudouridine synthase A (243 aa).

Asp53 serves as the catalytic Nucleophile. Tyr111 contributes to the substrate binding site.

It belongs to the tRNA pseudouridine synthase TruA family. In terms of assembly, homodimer.

The catalysed reaction is uridine(38/39/40) in tRNA = pseudouridine(38/39/40) in tRNA. Its function is as follows. Formation of pseudouridine at positions 38, 39 and 40 in the anticodon stem and loop of transfer RNAs. The protein is tRNA pseudouridine synthase A of Chlorobium limicola (strain DSM 245 / NBRC 103803 / 6330).